Here is a 787-residue protein sequence, read N- to C-terminus: Signal transducer and activator of transcription 5B (787 aa).

Tyrosine 90 is subject to Phosphotyrosine. Serine 128 is modified (phosphoserine). The SH2 domain occupies 589–686 (WNDGAILGFV…EVYSKYYTPV (98 aa)). Position 682 is a phosphotyrosine (tyrosine 682). The residue at position 699 (tyrosine 699) is a Phosphotyrosine; by HCK, JAK and PTK6.

It belongs to the transcription factor STAT family. In terms of assembly, upon activation, forms a homodimer or a heterodimer with a related family member. Binds NR3C1. Interacts with NCOA1. Interacts with NMI. Interacts with SOCS7. Interacts (via SH2 domain) with INSR. Interacts with CPEB3; this inhibits STAT5B-mediated transcriptional activation. In terms of processing, tyrosine phosphorylated in response to signaling via activated KIT, resulting in translocation to the nucleus. Tyrosine phosphorylated in response to signaling via activated FLT3; wild-type FLT3 results in much weaker phosphorylation than constitutively activated mutant FLT3. Alternatively, can be phosphorylated by JAK2. Phosphorylation at Tyr-699 by PTK6 or HCK leads to an increase of its transcriptional activity.

It localises to the cytoplasm. The protein localises to the nucleus. Carries out a dual function: signal transduction and activation of transcription. Mediates cellular responses to the cytokine KITLG/SCF and other growth factors. Binds to the GAS element and activates PRL-induced transcription. Positively regulates hematopoietic/erythroid differentiation. This Bos taurus (Bovine) protein is Signal transducer and activator of transcription 5B (STAT5B).